Reading from the N-terminus, the 140-residue chain is Small ribosomal subunit protein uS12 (140 aa).

The segment at 33-55 is disordered; sequence KEQTNVSSPQKRGVCTRVGTMTP.

Belongs to the universal ribosomal protein uS12 family. Part of the 30S ribosomal subunit. Contacts proteins S8 and S17. May interact with IF1 in the 30S initiation complex.

Functionally, with S4 and S5 plays an important role in translational accuracy. Interacts with and stabilizes bases of the 16S rRNA that are involved in tRNA selection in the A site and with the mRNA backbone. Located at the interface of the 30S and 50S subunits, it traverses the body of the 30S subunit contacting proteins on the other side and probably holding the rRNA structure together. The combined cluster of proteins S8, S12 and S17 appears to hold together the shoulder and platform of the 30S subunit. This Geobacillus kaustophilus (strain HTA426) protein is Small ribosomal subunit protein uS12.